Here is a 196-residue protein sequence, read N- to C-terminus: Holliday junction branch migration complex subunit RuvA (196 aa).

The domain I stretch occupies residues 1-65 (MIGNLSGTVD…ENTTQLYGFI (65 aa)). The domain II stretch occupies residues 66-143 (NKEEQSCLRL…KLETNNNNFY (78 aa)). Residues 144-147 (PINE) form a flexible linker region. The interval 147-196 (EDAVSALINLGYEKTKVYDTIKKYKPNLDTKDIIRTALKELSNYEIDIMQ) is domain III.

Belongs to the RuvA family. In terms of assembly, homotetramer. Forms an RuvA(8)-RuvB(12)-Holliday junction (HJ) complex. HJ DNA is sandwiched between 2 RuvA tetramers; dsDNA enters through RuvA and exits via RuvB. An RuvB hexamer assembles on each DNA strand where it exits the tetramer. Each RuvB hexamer is contacted by two RuvA subunits (via domain III) on 2 adjacent RuvB subunits; this complex drives branch migration. In the full resolvosome a probable DNA-RuvA(4)-RuvB(12)-RuvC(2) complex forms which resolves the HJ.

It is found in the cytoplasm. In terms of biological role, the RuvA-RuvB-RuvC complex processes Holliday junction (HJ) DNA during genetic recombination and DNA repair, while the RuvA-RuvB complex plays an important role in the rescue of blocked DNA replication forks via replication fork reversal (RFR). RuvA specifically binds to HJ cruciform DNA, conferring on it an open structure. The RuvB hexamer acts as an ATP-dependent pump, pulling dsDNA into and through the RuvAB complex. HJ branch migration allows RuvC to scan DNA until it finds its consensus sequence, where it cleaves and resolves the cruciform DNA. The sequence is that of Holliday junction branch migration complex subunit RuvA from Wolbachia sp. subsp. Brugia malayi (strain TRS).